The primary structure comprises 248 residues: ATP synthase subunit a, chloroplastic (248 aa).

5 consecutive transmembrane segments (helical) span residues 38–58, 96–116, 135–155, 200–220, and 221–241; these read QVLI…TLAV, VPFI…GALF, INTT…AGFT, LVVA…VMFL, and GLFT…AYIG.

This sequence belongs to the ATPase A chain family. As to quaternary structure, F-type ATPases have 2 components, CF(1) - the catalytic core - and CF(0) - the membrane proton channel. CF(1) has five subunits: alpha(3), beta(3), gamma(1), delta(1), epsilon(1). CF(0) has four main subunits: a, b, b' and c.

It localises to the plastid. Its subcellular location is the chloroplast thylakoid membrane. In terms of biological role, key component of the proton channel; it plays a direct role in the translocation of protons across the membrane. In Cryptomeria japonica (Japanese cedar), this protein is ATP synthase subunit a, chloroplastic.